Reading from the N-terminus, the 397-residue chain is Acetate kinase (397 aa).

Asn-8 lines the Mg(2+) pocket. Lys-15 contacts ATP. Substrate is bound at residue Arg-89. Asp-146 serves as the catalytic Proton donor/acceptor. ATP-binding positions include 206–210, 283–285, and 331–335; these read HVGNG, DMR, and GMGEN. Glu-383 serves as a coordination point for Mg(2+).

It belongs to the acetokinase family. As to quaternary structure, homodimer. It depends on Mg(2+) as a cofactor. The cofactor is Mn(2+).

It localises to the cytoplasm. It carries out the reaction acetate + ATP = acetyl phosphate + ADP. Its pathway is metabolic intermediate biosynthesis; acetyl-CoA biosynthesis; acetyl-CoA from acetate: step 1/2. In terms of biological role, catalyzes the formation of acetyl phosphate from acetate and ATP. Can also catalyze the reverse reaction. The protein is Acetate kinase of Streptococcus agalactiae serotype Ia (strain ATCC 27591 / A909 / CDC SS700).